Reading from the N-terminus, the 91-residue chain is Putative defensin-like protein 145 (91 aa).

The N-terminal stretch at 1 to 26 (MNKNIIFSFTVLTLFVIFVQVTGVIG) is a signal peptide. Residues Asn-35 and Asn-68 are each glycosylated (N-linked (GlcNAc...) asparagine). 4 disulfides stabilise this stretch: Cys-39–Cys-84, Cys-52–Cys-74, Cys-57–Cys-78, and Cys-61–Cys-80.

Belongs to the DEFL family.

The protein resides in the secreted. The chain is Putative defensin-like protein 145 (LCR2) from Arabidopsis thaliana (Mouse-ear cress).